A 92-amino-acid polypeptide reads, in one-letter code: Transcription factor PRE4 (92 aa).

The bHLH domain occupies 5-60; it reads KSRSRQTGASMITDEQINDLVLQLHRLLPELANNRRSGKVSASRVLQETCSYIRNL.

The protein belongs to the bHLH protein family. Interacts with HFR1 and IBH1. Expressed in roots, leaves, stems and flowers.

It localises to the nucleus. Functionally, atypical and probable non DNA-binding bHLH transcription factor that integrates multiple signaling pathways to regulate cell elongation and plant development. Regulates light responses by binding and inhibiting the activity of the bHLH transcription factor HFR1, a critical regulator of light signaling and shade avoidance. May have a regulatory role in various aspects of gibberellin-dependent growth and development. This Arabidopsis thaliana (Mouse-ear cress) protein is Transcription factor PRE4 (PRE4).